A 384-amino-acid polypeptide reads, in one-letter code: Probable 2-heptyl-3-hydroxy-4(1H)-quinolone synthase AqdB2 (384 aa).

It belongs to the 3-hydroxybenzoate 6-hydroxylase family.

It carries out the reaction 2-heptyl-4(1H)-quinolone + NADH + O2 + H(+) = 2-heptyl-3-hydroxy-4(1H)-quinolone + NAD(+) + H2O. Involved in the degradation of the Pseudomonas aeruginosa quorum sensing signal molecule HHQ (2-heptyl-4-quinolone) to anthranilic acid. Probably catalyzes the hydroxylation of HHQ to PQS (2-heptyl-3-hydroxy-4-quinolone). The sequence is that of Probable 2-heptyl-3-hydroxy-4(1H)-quinolone synthase AqdB2 from Rhodococcus erythropolis (Arthrobacter picolinophilus).